The primary structure comprises 420 residues: Glucose-1-phosphate adenylyltransferase (420 aa).

Residues Y108, G173, 188 to 189 (EK), and S206 contribute to the alpha-D-glucose 1-phosphate site.

This sequence belongs to the bacterial/plant glucose-1-phosphate adenylyltransferase family. As to quaternary structure, homotetramer.

It catalyses the reaction alpha-D-glucose 1-phosphate + ATP + H(+) = ADP-alpha-D-glucose + diphosphate. It participates in glycan biosynthesis; glycogen biosynthesis. In terms of biological role, involved in the biosynthesis of ADP-glucose, a building block required for the elongation reactions to produce glycogen. Catalyzes the reaction between ATP and alpha-D-glucose 1-phosphate (G1P) to produce pyrophosphate and ADP-Glc. The protein is Glucose-1-phosphate adenylyltransferase of Paraburkholderia phytofirmans (strain DSM 17436 / LMG 22146 / PsJN) (Burkholderia phytofirmans).